The chain runs to 1275 residues: ATP-dependent helicase/nuclease subunit A (1275 aa).

The UvrD-like helicase ATP-binding domain maps to 4-481 (PKWTKEQLEV…IMLYKNFRSR (478 aa)). 25–32 (AAAGSGKT) is an ATP binding site. The 309-residue stretch at 531–839 (TEIHLIQKDN…RIMSIHKSKG (309 aa)) folds into the UvrD-like helicase C-terminal domain.

It belongs to the helicase family. AddA subfamily. In terms of assembly, heterodimer of AddA and AddB/RexB. Mg(2+) serves as cofactor.

The catalysed reaction is Couples ATP hydrolysis with the unwinding of duplex DNA by translocating in the 3'-5' direction.. The enzyme catalyses ATP + H2O = ADP + phosphate + H(+). Its function is as follows. The heterodimer acts as both an ATP-dependent DNA helicase and an ATP-dependent, dual-direction single-stranded exonuclease. Recognizes the chi site generating a DNA molecule suitable for the initiation of homologous recombination. The AddA nuclease domain is required for chi fragment generation; this subunit has the helicase and 3' -&gt; 5' nuclease activities. In Clostridioides difficile (strain 630) (Peptoclostridium difficile), this protein is ATP-dependent helicase/nuclease subunit A.